A 712-amino-acid chain; its full sequence is MCGRNQLFVASLLASACLIYCVQYVTVFYGVPVWRNASIPLFCATKNRDTWGTIQCLPDNDDYQEIALNVTEAFDAWNNTVTEQAVEDVWSLFETSIKPCVKLTPLCVAMRCNSTTAKNTTSTPTTTTTANTTIGENSSCIRTDNCTGLGEEEMVDCQFNMTGLERDKKKLYNETWYSKDVVCESKDTKKEKTCYMNHCNTSVITESCDKHYWDTMRFRYCAPPGFALLRCNDTNYSGFEPNCSKVVAATCTRMMETQTSTWFGFNGTRAENRTYIYWHGRDNRTIISLNKFYNLTILCKRPGNKTVVPITLMSGLVFHSQPINRRPRQAWCWFKGEWKEAMKEVKLTLAKHPRYKGTNDTEKIRFIAPGERSDPEVAYMWTNCRGEFLYCNMTWFLNWVENRTNQTQHNYVPCHIKQIINTWHKVGKNVYLPPREGQLTCNSTVTSIIANIDGGENQTNITFSAEVAELYRLELGDYKLIEVTPIGFAPTSIKRYSSAPVRNKRGVFVLGFLGFLTTAGAAMGAASLTLSAQSRTSLAGIVQQQQQLLDVVKRQQEMLRLTVWGTKNLQARVTAIEKYLKDQAQLNSWGCAFRQVCHTTVPWVNDTLTPDWNNITWQEWEQRIRNLEANISESLEQAQIQQEKNMYELQKLNSWDVFSNWFDLTSWIKYIQYGVYIVVGIIVLRMVIYVVQMLSRLRKGYRPVFSSPPAYS.

A signal peptide spans 1–24 (MCGRNQLFVASLLASACLIYCVQY). The Extracellular portion of the chain corresponds to 25–673 (VTVFYGVPVW…LTSWIKYIQY (649 aa)). N-linked (GlcNAc...) asparagine; by host glycosylation is present at N36. The cysteines at positions 43 and 56 are disulfide-linked. N-linked (GlcNAc...) asparagine; by host glycans are attached at residues N69, N78, N113, N119, N131, N137, N145, N160, N173, N200, N232, N235, N242, N266, N272, N283, N294, N304, N359, N392, N402, N405, N442, N457, and N460. 5 cysteine pairs are disulfide-bonded: C100–C208, C107–C199, C112–C157, C221–C251, and C231–C243. The tract at residues 112–156 (CNSTTAKNTTSTPTTTTTANTTIGENSSCIRTDNCTGLGEEEMVD) is V1. A V2 region spans residues 157–199 (CQFNMTGLERDKKKLYNETWYSKDVVCESKDTKKEKTCYMNHC). Residues 299–331 (CKRPGNKTVVPITLMSGLVFHSQPINRRPRQAW) are V3. C299 and C332 form a disulfide bridge. Intrachain disulfides connect C384–C441 and C391–C414. Positions 391–414 (CNMTWFLNWVENRTNQTQHNYVPC) are V4. The segment at 457–463 (NQTNITF) is V5. A fusion peptide region spans residues 506-526 (GVFVLGFLGFLTTAGAAMGAA). The tract at residues 569 to 585 (LQARVTAIEKYLKDQAQ) is immunosuppression. Residues N605, N614, and N630 are each glycosylated (N-linked (GlcNAc...) asparagine; by host). Residues 614–646 (NITWQEWEQRIRNLEANISESLEQAQIQQEKNM) adopt a coiled-coil conformation. The tract at residues 651-672 (KLNSWDVFSNWFDLTSWIKYIQ) is MPER; binding to GalCer. A helical transmembrane segment spans residues 674–694 (GVYIVVGIIVLRMVIYVVQML). Residues 695 to 712 (SRLRKGYRPVFSSPPAYS) lie on the Cytoplasmic side of the membrane. The YXXV motif; contains endocytosis signal motif lies at 701–704 (YRPV).

As to quaternary structure, the mature envelope protein (Env) consists of a homotrimer of non-covalently associated gp120-gp41 heterodimers. The resulting complex protrudes from the virus surface as a spike. There seems to be as few as 10 spikes on the average virion. Interacts with human CD4, CCR5 and CXCR4, to form a P4HB/PDI-CD4-CXCR4-gp120 complex. Gp120 also interacts with the C-type lectins CD209/DC-SIGN and CLEC4M/DC-SIGNR (collectively referred to as DC-SIGN(R)). Gp120 and gp41 interact with GalCer. The mature envelope protein (Env) consists of a homotrimer of non-covalently associated gp120-gp41 heterodimers. The resulting complex protrudes from the virus surface as a spike. There seems to be as few as 10 spikes on the average virion. Specific enzymatic cleavages in vivo yield mature proteins. Envelope glycoproteins are synthesized as an inactive precursor that is heavily N-glycosylated and processed likely by host cell furin in the Golgi to yield the mature SU and TM proteins. The cleavage site between SU and TM requires the minimal sequence [KR]-X-[KR]-R.

It localises to the virion membrane. The protein localises to the host cell membrane. The protein resides in the host endosome membrane. In terms of biological role, the surface protein gp120 (SU) attaches the virus to the host lymphoid cell by binding to the primary receptor CD4. This interaction induces a structural rearrangement creating a high affinity binding site for a chemokine coreceptor like CXCR4 and/or CCR5. This peculiar 2 stage receptor-interaction strategy allows gp120 to maintain the highly conserved coreceptor-binding site in a cryptic conformation, protected from neutralizing antibodies. Since CD4 also displays a binding site for the disulfide-isomerase P4HB/PDI, a P4HB/PDI-CD4-CXCR4-gp120 complex may form. In that complex, P4HB/PDI could reach and reduce gp120 disulfide bonds, causing major conformational changes in gp120. TXN, another PDI family member could also be involved in disulfide rearrangements in Env during fusion. These changes are transmitted to the transmembrane protein gp41 and are thought to activate its fusogenic potential by unmasking its fusion peptide. Its function is as follows. The surface protein gp120 is a ligand for CD209/DC-SIGN and CLEC4M/DC-SIGNR, which are respectively found on dendritic cells (DCs), and on endothelial cells of liver sinusoids and lymph node sinuses. These interactions allow capture of viral particles at mucosal surfaces by these cells and subsequent transmission to permissive cells. DCs are professional antigen presenting cells, critical for host immunity by inducing specific immune responses against a broad variety of pathogens. They act as sentinels in various tissues where they take up antigen, process it, and present it to T-cells following migration to lymphoid organs. HIV subverts the migration properties of dendritic cells to gain access to CD4+ T-cells in lymph nodes. Virus transmission to permissive T-cells occurs either in trans (without DCs infection, through viral capture and transmission), or in cis (following DCs productive infection, through the usual CD4-gp120 interaction), thereby inducing a robust infection. In trans infection, bound virions remain infectious over days and it is proposed that they are not degraded, but protected in non-lysosomal acidic organelles within the DCs close to the cell membrane thus contributing to the viral infectious potential during DCs' migration from the periphery to the lymphoid tissues. On arrival at lymphoid tissues, intact virions recycle back to DCs' cell surface allowing virus transmission to CD4+ T-cells. Virion capture also seems to lead to MHC-II-restricted viral antigen presentation, and probably to the activation of HIV-specific CD4+ cells. Functionally, the transmembrane protein gp41 (TM) acts as a class I viral fusion protein. Under the current model, the protein has at least 3 conformational states: pre-fusion native state, pre-hairpin intermediate state, and post-fusion hairpin state. During fusion of viral and target intracellular membranes, the coiled coil regions (heptad repeats) assume a trimer-of-hairpins structure, positioning the fusion peptide in close proximity to the C-terminal region of the ectodomain. The formation of this structure appears to drive apposition and subsequent fusion of viral and target cell membranes. Complete fusion occurs in host cell endosomes and is dynamin-dependent, however some lipid transfer might occur at the plasma membrane. The virus undergoes clathrin-dependent internalization long before endosomal fusion, thus minimizing the surface exposure of conserved viral epitopes during fusion and reducing the efficacy of inhibitors targeting these epitopes. Membranes fusion leads to delivery of the nucleocapsid into the cytoplasm. The envelope glycoprotein gp160 precursor down-modulates cell surface CD4 antigen by interacting with it in the endoplasmic reticulum and blocking its transport to the cell surface. In terms of biological role, the gp120-gp41 heterodimer seems to contribute to T-cell depletion during HIV-1 infection. The envelope glycoproteins expressed on the surface of infected cells induce apoptosis through an interaction with uninfected cells expressing the receptor (CD4) and the coreceptors CXCR4 or CCR5. This type of bystander killing may be obtained by at least three distinct mechanisms. First, the interaction between the 2 cells can induce cellular fusion followed by nuclear fusion within the syncytium. Syncytia are condemned to die from apoptosis. Second, the 2 interacting cells may not fuse entirely and simply exchange plasma membrane lipids, after a sort of hemifusion process, followed by rapid death. Third, it is possible that virus-infected cells, on the point of undergoing apoptosis, fuse with CD4-expressing cells, in which case apoptosis is rapidly transmitted from one cell to the other and thus occurs in a sort of contagious fashion. Its function is as follows. The gp120-gp41 heterodimer allows rapid transcytosis of the virus through CD4 negative cells such as simple epithelial monolayers of the intestinal, rectal and endocervical epithelial barriers. Both gp120 and gp41 specifically recognize glycosphingolipids galactosyl-ceramide (GalCer) or 3' sulfo-galactosyl-ceramide (GalS) present in the lipid rafts structures of epithelial cells. Binding to these alternative receptors allows the rapid transcytosis of the virus through the epithelial cells. This transcytotic vesicle-mediated transport of virions from the apical side to the basolateral side of the epithelial cells does not involve infection of the cells themselves. The polypeptide is Envelope glycoprotein gp160 (env) (Homo sapiens (Human)).